The sequence spans 221 residues: N-(5'-phosphoribosyl)anthranilate isomerase (221 aa).

The protein belongs to the TrpF family.

It catalyses the reaction N-(5-phospho-beta-D-ribosyl)anthranilate = 1-(2-carboxyphenylamino)-1-deoxy-D-ribulose 5-phosphate. It functions in the pathway amino-acid biosynthesis; L-tryptophan biosynthesis; L-tryptophan from chorismate: step 3/5. In Geobacillus thermodenitrificans (strain NG80-2), this protein is N-(5'-phosphoribosyl)anthranilate isomerase.